Here is a 529-residue protein sequence, read N- to C-terminus: Calcium-dependent protein kinase 3 (529 aa).

The interval 1 to 73 is disordered; sequence MGHRHSKSKS…GRILGRPMEE (73 aa). Gly2 carries N-myristoyl glycine lipidation. Residues 39–53 show a composition bias toward gly residues; that stretch reads SGSGTVGSSGSGTGG. Positions 78–336 constitute a Protein kinase domain; it reads YEFGRELGRG…AAEVLNHPWI (259 aa). Residues 84–92 and Lys107 contribute to the ATP site; that span reads LGRGQFGVT. The active-site Proton acceptor is Asp202. Ser242 carries the phosphoserine modification. The interval 342–372 is autoinhibitory domain; it reads ASDKPLDNAVLSRMKQFRAMNKLKKMALKVI. 4 consecutive EF-hand domains span residues 379–414, 415–450, 451–485, and 486–521; these read EEII…LGSK, ISEA…MNRI, ERED…KYNM, and GDDK…GNPE. Asp392, Asp394, Asn396, Glu403, Asp428, Asp430, Asp432, Ser434, Glu439, Asp464, Asp466, Ser468, Tyr470, Glu475, Asp499, Asp501, Asp503, Lys505, and Glu510 together coordinate Ca(2+).

The protein belongs to the protein kinase superfamily. Ser/Thr protein kinase family. CDPK subfamily. In terms of assembly, interacts with GHR1. Expressed in both guard cells and mesophyll cells.

It localises to the cytoplasm. The protein localises to the nucleus. The enzyme catalyses L-seryl-[protein] + ATP = O-phospho-L-seryl-[protein] + ADP + H(+). It carries out the reaction L-threonyl-[protein] + ATP = O-phospho-L-threonyl-[protein] + ADP + H(+). With respect to regulation, activated by calcium. Autophosphorylation may play an important role in the regulation of the kinase activity. Its function is as follows. May play a role in signal transduction pathways that involve calcium as a second messenger. Functions in abscisic acid (ABA) regulation of guard cell S-type anion- and Ca(2+)-permeable channels and stomatal closure. The polypeptide is Calcium-dependent protein kinase 3 (Arabidopsis thaliana (Mouse-ear cress)).